We begin with the raw amino-acid sequence, 772 residues long: Endoplasmic reticulum membrane sensor NFE2L1 (772 aa).

Residues 7-24 traverse the membrane as a helical; Signal-anchor for type II membrane protein segment; the sequence is YLTEGLLQFTILLSLIGV. A disordered region spans residues 108-148; that stretch reads DPEGSVSGSQPNSGLALESSSGLQDVTGPDNGVRESETEQG. The span at 113 to 131 shows a compositional bias: polar residues; it reads VSGSQPNSGLALESSSGLQ. Positions 191-199 are cholesterol recognition/amino acid consensus (CRAC) region; sequence VFDYSHRQK. Residues Asn-348 and Asn-360 are each glycosylated (N-linked (GlcNAc...) asparagine). The segment at 379-383 is CPD; the sequence is SPEVE. N-linked (GlcNAc...) asparagine glycosylation is found at Asn-412 and Asn-423. Disordered stretches follow at residues 470-532 and 582-613; these read EEEF…DSET and SALD…QMSR. The Destruction motif motif lies at 476 to 480; sequence DSGLS. Residues 476-523 are compositionally biased toward low complexity; sequence DSGLSLDSSHSPSSLSSSEGSSSSSSSSSSSSSSASSSASSSFSEEGA. A Phosphoserine; by CK2 modification is found at Ser-528. A compositionally biased stretch (basic and acidic residues) spans 598–613; it reads GSKEKQADFLDKQMSR. At Ser-599 the chain carries Phosphoserine; by PKA. The bZIP domain occupies 654-717; sequence LIRDIRRRGK…RQMKQKVQSL (64 aa). Residues 656–675 form a basic motif region; it reads RDIRRRGKNKMAAQNCRKRK. Residues 682–696 form a leucine-zipper region; the sequence is LERDVEDLQRDKARL.

Belongs to the bZIP family. CNC subfamily. As to quaternary structure, interacts with KEAP1. In terms of assembly, interacts (via CPD region) with FBXW7; leading to its ubiquitination and degradation. Interacts with SYVN1/HRD1; leading to its ubiquitination and degradation. Interacts (when ubiquitinated) with DDI2; leading to its cleavage. Interacts (via the bZIP domain) with small MAF protein (MAFF, MAFG or MAFK); required for binding to antioxidant response elements (AREs) on DNA. Interacts (via Destruction motif) with BTRC; leading to its ubiquitination and degradation. Interacts with CEBPB; the heterodimer represses expression of DSPP during odontoblast differentiation. Interacts with MOTS-c, a peptide produced by the mitochondrially encoded 12S rRNA MT-RNR1. In terms of processing, cleaved at Leu-104 by the aspartyl protease DDI2 following retrotranslocation, releasing the protein from the endoplasmic reticulum membrane and forming the transcription factor NRF1 that translocates into the nucleus. Ubiquitination is prerequisite for cleavage by aspartyl protease DDI2. N-glycosylated in normal conditions, when it has a single-pass type II membrane protein topology, with the DNA-binding domain facing the endoplasmic reticulum lumen. Deglycosylated during retrotranslocation to the cytosolic side of the membrane, to have a single-pass type III membrane protein topology with the major part of the protein facing the cytosol. Post-translationally, ubiquitinated by the SCF(FBXW7) complex and SYVN1/HRD1, leading to its degradation by the proteasome. Ubiquitinated during retrotranslocation to the cytosolic side of the membrane: ubiquitination does not lead to degradation and is required for processing by the aspartyl protease DDI2 and subsequent release from the endoplasmic reticulum membrane. In terms of processing, phosphorylation by CK2 at Ser-528 inhibits transcription factor activity, possibly by affecting DNA-binding activity. Phosphorylation at Ser-599 is required for interaction with CEBPB. Ubiquitinated by the SCF(BTRC) complex in the nucleus, leading to its degradation by the proteasome.

The protein resides in the endoplasmic reticulum membrane. Its subcellular location is the nucleus. Endoplasmic reticulum membrane sensor that translocates into the nucleus in response to various stresses to act as a transcription factor. Constitutes a precursor of the transcription factor NRF1. Able to detect various cellular stresses, such as cholesterol excess, oxidative stress or proteasome inhibition. In response to stress, it is released from the endoplasmic reticulum membrane following cleavage by the protease DDI2 and translocates into the nucleus to form the transcription factor NRF1. Acts as a key sensor of cholesterol excess: in excess cholesterol conditions, the endoplasmic reticulum membrane form of the protein directly binds cholesterol via its CRAC motif, preventing cleavage and release of the transcription factor NRF1, thereby allowing expression of genes promoting cholesterol removal, such as CD36. Involved in proteasome homeostasis: in response to proteasome inhibition, it is released from the endoplasmic reticulum membrane, translocates to the nucleus and activates expression of genes encoding proteasome subunits. Its function is as follows. CNC-type bZIP family transcription factor that translocates to the nucleus and regulates expression of target genes in response to various stresses. Heterodimerizes with small-Maf proteins (MAFF, MAFG or MAFK) and binds DNA motifs including the antioxidant response elements (AREs), which regulate expression of genes involved in oxidative stress response. Activates or represses expression of target genes, depending on the context. Plays a key role in cholesterol homeostasis by acting as a sensor of cholesterol excess: in low cholesterol conditions, translocates into the nucleus and represses expression of genes involved in defense against cholesterol excess, such as CD36. In excess cholesterol conditions, the endoplasmic reticulum membrane form of the protein directly binds cholesterol via its CRAC motif, preventing cleavage and release of the transcription factor NRF1, thereby allowing expression of genes promoting cholesterol removal. Critical for redox balance in response to oxidative stress: acts by binding the AREs motifs on promoters and mediating activation of oxidative stress response genes, such as GCLC, GCLM, GSS, MT1 and MT2. Plays an essential role during fetal liver hematopoiesis: probably has a protective function against oxidative stress and is involved in lipid homeostasis in the liver. Involved in proteasome homeostasis: in response to proteasome inhibition, mediates the 'bounce-back' of proteasome subunits by translocating into the nucleus and activating expression of genes encoding proteasome subunits. Also involved in regulating glucose flux. Together with CEBPB; represses expression of DSPP during odontoblast differentiation. In response to ascorbic acid induction, activates expression of SP7/Osterix in osteoblasts. This Homo sapiens (Human) protein is Endoplasmic reticulum membrane sensor NFE2L1 (NFE2L1).